A 171-amino-acid polypeptide reads, in one-letter code: Adenine phosphoribosyltransferase (171 aa).

It belongs to the purine/pyrimidine phosphoribosyltransferase family. In terms of assembly, homodimer.

The protein resides in the cytoplasm. It carries out the reaction AMP + diphosphate = 5-phospho-alpha-D-ribose 1-diphosphate + adenine. Its pathway is purine metabolism; AMP biosynthesis via salvage pathway; AMP from adenine: step 1/1. Catalyzes a salvage reaction resulting in the formation of AMP, that is energically less costly than de novo synthesis. The sequence is that of Adenine phosphoribosyltransferase from Pelotomaculum thermopropionicum (strain DSM 13744 / JCM 10971 / SI).